We begin with the raw amino-acid sequence, 382 residues long: Flap endonuclease 1 (382 aa).

The N-domain stretch occupies residues 1–104 (MGIKGLSQVI…GELEKRTERR (104 aa)). Position 34 (D34) interacts with Mg(2+). Positions 47 and 70 each coordinate DNA. Residues D86, E158, E160, D179, and D181 each coordinate Mg(2+). Residues 122-253 (EAEKFERRLV…KKAVELIKQH (132 aa)) form an I-domain region. E158 is a binding site for DNA. Positions 231 and 233 each coordinate DNA. D233 contributes to the Mg(2+) binding site. Positions 336 to 344 (TQGRIDSFF) are interaction with PCNA. Residues 359 to 368 (KAQEEAEKMK) are compositionally biased toward basic and acidic residues. Residues 359 to 382 (KAQEEAEKMKKGGKKSGPPKKKAK) form a disordered region. Positions 369–382 (KGGKKSGPPKKKAK) are enriched in basic residues.

The protein belongs to the XPG/RAD2 endonuclease family. FEN1 subfamily. Interacts with PCNA. Three molecules of crn-1 bind to one PCNA trimer with each molecule binding to one PCNA monomer. PCNA stimulates the nuclease activity without altering cleavage specificity. Requires Mg(2+) as cofactor. Post-translationally, phosphorylated. Phosphorylation upon DNA damage induces relocalization to the nuclear plasma.

Its subcellular location is the nucleus. It is found in the nucleolus. The protein localises to the nucleoplasm. It localises to the mitochondrion. In terms of biological role, structure-specific nuclease with 5'-flap endonuclease and 5'-3' exonuclease activities involved in DNA replication and repair. During DNA replication, cleaves the 5'-overhanging flap structure that is generated by displacement synthesis when DNA polymerase encounters the 5'-end of a downstream Okazaki fragment. It enters the flap from the 5'-end and then tracks to cleave the flap base, leaving a nick for ligation. Also involved in the long patch base excision repair (LP-BER) pathway, by cleaving within the apurinic/apyrimidinic (AP) site-terminated flap. Acts as a genome stabilization factor that prevents flaps from equilibrating into structures that lead to duplications and deletions. Also possesses 5'-3' exonuclease activity on nicked or gapped double-stranded DNA, and exhibits RNase H activity. Also involved in replication and repair of rDNA and in repairing mitochondrial DNA. This Caenorhabditis briggsae protein is Flap endonuclease 1.